A 146-amino-acid polypeptide reads, in one-letter code: MKVLLLLAVVIMAFGSIQVQGSLLEFGQMILFKTGKRADVSYGFYGCHCGVGGRGSPKDATDWCCVTHDCCYNRLEKRGCGTKFLTYKFSYRGGQISCSTNQDSCRKQLCQCDKAAAECFARNKKSYSLKYQFYPNKFCKGKTPSC.

An N-terminal signal peptide occupies residues 1 to 21 (MKVLLLLAVVIMAFGSIQVQG). Intrachain disulfides connect cysteine 47/cysteine 139, cysteine 49/cysteine 65, cysteine 64/cysteine 119, cysteine 70/cysteine 146, cysteine 71/cysteine 112, cysteine 80/cysteine 105, and cysteine 98/cysteine 110. The Ca(2+) site is built by histidine 48, glycine 50, and glycine 52. Residue histidine 68 is part of the active site. Residue aspartate 69 coordinates Ca(2+). Aspartate 113 is an active-site residue.

The protein belongs to the phospholipase A2 family. It depends on Ca(2+) as a cofactor.

The protein localises to the secreted. It is found in the cell membrane. It localises to the mitochondrion outer membrane. It carries out the reaction a 1,2-diacyl-sn-glycero-3-phosphoethanolamine + H2O = a 1-acyl-sn-glycero-3-phosphoethanolamine + a fatty acid + H(+). The catalysed reaction is 1-hexadecanoyl-2-(9Z-octadecenoyl)-sn-glycero-3-phosphoethanolamine + H2O = 1-hexadecanoyl-sn-glycero-3-phosphoethanolamine + (9Z)-octadecenoate + H(+). It catalyses the reaction 1-hexadecanoyl-2-(9Z,12Z-octadecadienoyl)-sn-glycero-3-phosphoethanolamine + H2O = 1-hexadecanoyl-sn-glycero-3-phosphoethanolamine + (9Z,12Z)-octadecadienoate + H(+). The enzyme catalyses 1-hexadecanoyl-2-(5Z,8Z,11Z,14Z-eicosatetraenoyl)-sn-glycero-3-phosphoethanolamine + H2O = 1-hexadecanoyl-sn-glycero-3-phosphoethanolamine + (5Z,8Z,11Z,14Z)-eicosatetraenoate + H(+). It carries out the reaction N-hexadecanoyl-1,2-di-(9Z-octadecenoyl)-sn-glycero-3-phosphoethanolamine + H2O = N-hexadecanoyl-1-(9Z-octadecenoyl)-sn-glycero-3-phosphoethanolamine + (9Z)-octadecenoate + H(+). The catalysed reaction is 1,2-dihexadecanoyl-sn-glycero-3-phospho-(1'-sn-glycerol) + H2O = 1-hexadecanoyl-sn-glycero-3-phospho-(1'-sn-glycerol) + hexadecanoate + H(+). It catalyses the reaction 1-hexadecanoyl-2-(9Z-octadecenoyl)-sn-glycero-3-phosphoglycerol + H2O = 1-hexadecanoyl-sn-glycero-3-phosphoglycerol + (9Z)-octadecenoate + H(+). The enzyme catalyses 1-hexadecanoyl-2-(9Z-octadecenoyl)-sn-glycero-3-phospho-(1'-sn-glycerol) + H2O = 1-hexadecanoyl-sn-glycero-3-phospho-(1'-sn-glycerol) + (9Z)-octadecenoate + H(+). It carries out the reaction a 1,2-diacyl-sn-glycero-3-phosphocholine + H2O = a 1-acyl-sn-glycero-3-phosphocholine + a fatty acid + H(+). The catalysed reaction is 1,2-dihexadecanoyl-sn-glycero-3-phosphocholine + H2O = 1-hexadecanoyl-sn-glycero-3-phosphocholine + hexadecanoate + H(+). It catalyses the reaction 1-hexadecanoyl-2-(9Z-octadecenoyl)-sn-glycero-3-phosphocholine + H2O = 1-hexadecanoyl-sn-glycero-3-phosphocholine + (9Z)-octadecenoate + H(+). The enzyme catalyses 1-hexadecanoyl-2-(9Z,12Z-octadecadienoyl)-sn-glycero-3-phosphocholine + H2O = (9Z,12Z)-octadecadienoate + 1-hexadecanoyl-sn-glycero-3-phosphocholine + H(+). It carries out the reaction 1-hexadecanoyl-2-(4Z,7Z,10Z,13Z,16Z,19Z-docosahexaenoyl)-sn-glycero-3-phosphocholine + H2O = (4Z,7Z,10Z,13Z,16Z,19Z)-docosahexaenoate + 1-hexadecanoyl-sn-glycero-3-phosphocholine + H(+). In terms of biological role, secretory calcium-dependent phospholipase A2 that primarily targets extracellular phospholipids with implications in host antimicrobial defense, inflammatory response and tissue regeneration. Hydrolyzes the ester bond of the fatty acyl group attached at sn-2 position of phospholipids (phospholipase A2 activity) with preference for phosphatidylethanolamines and phosphatidylglycerols over phosphatidylcholines. Contributes to lipid remodeling of cellular membranes and generation of lipid mediators involved in pathogen clearance. Displays bactericidal activity against Gram-positive bacteria by directly hydrolyzing phospholipids of the bacterial membrane. Upon sterile inflammation, targets membrane phospholipids of extracellular mitochondria released from activated platelets, generating free unsaturated fatty acids such as arachidonate that is used by neighboring leukocytes to synthesize inflammatory eicosanoids such as leukotrienes. Simultaneously, by compromising mitochondrial membrane integrity, promotes the release in circulation of potent damage-associated molecular pattern molecules that activate the innate immune response. Plays a stem cell regulator role in the intestinal crypt. Within intracellular compartment mediates Paneth cell differentiation and its stem cell supporting functions by inhibiting Wnt signaling pathway in intestinal stem cell (ICS). Secreted in the intestinal lumen upon inflammation, acts in an autocrine way and promotes prostaglandin E2 synthesis that stimulates Wnt signaling pathway in ICS cells and tissue regeneration. May play a role in the biosynthesis of N-acyl ethanolamines that regulate energy metabolism and inflammation. Hydrolyzes N-acyl phosphatidylethanolamines to N-acyl lysophosphatidylethanolamines, which are further cleaved by a lysophospholipase D to release N-acyl ethanolamines. Independent of its catalytic activity, acts as a ligand for integrins. Binds to and activates integrins ITGAV:ITGB3, ITGA4:ITGB1 and ITGA5:ITGB1. Binds to a site (site 2) which is distinct from the classical ligand-binding site (site 1) and induces integrin conformational changes and enhanced ligand binding to site 1. Induces cell proliferation in an integrin-dependent manner. This is Phospholipase A2, membrane associated (Pla2g2a) from Rattus norvegicus (Rat).